We begin with the raw amino-acid sequence, 247 residues long: Isoprenyl transferase (247 aa).

Asp-18 is a catalytic residue. A Mg(2+)-binding site is contributed by Asp-18. Substrate is bound by residues 19–22 (GNGR), Trp-23, Arg-31, His-35, and 63–65 (SSE). Asn-66 acts as the Proton acceptor in catalysis. Substrate-binding positions include Trp-67, Arg-69, Arg-186, and 192 to 194 (RLS). Glu-205 contributes to the Mg(2+) binding site.

This sequence belongs to the UPP synthase family. In terms of assembly, homodimer. It depends on Mg(2+) as a cofactor.

Functionally, catalyzes the condensation of isopentenyl diphosphate (IPP) with allylic pyrophosphates generating different type of terpenoids. The chain is Isoprenyl transferase from Agrobacterium fabrum (strain C58 / ATCC 33970) (Agrobacterium tumefaciens (strain C58)).